The primary structure comprises 130 residues: Sirohydrochlorin cobaltochelatase (130 aa).

H12 functions as the Proton acceptor in the catalytic mechanism. H12 is a binding site for Co(2+). H12 is a binding site for Ni(2+). Residues E48 and 73-78 (LASGVH) contribute to the substrate site. Co(2+) is bound at residue H78. H78 is a binding site for Ni(2+).

The protein belongs to the CbiX family. CbiXS subfamily. In terms of assembly, homotetramer; dimer of dimers.

The enzyme catalyses Co-sirohydrochlorin + 2 H(+) = sirohydrochlorin + Co(2+). It carries out the reaction Ni-sirohydrochlorin + 2 H(+) = sirohydrochlorin + Ni(2+). The protein operates within cofactor biosynthesis; adenosylcobalamin biosynthesis; cob(II)yrinate a,c-diamide from sirohydrochlorin (anaerobic route): step 1/10. Functionally, catalyzes the insertion of Co(2+) into sirohydrochlorin as part of the anaerobic pathway to cobalamin biosynthesis (Potential). Involved in the biosynthesis of the unique nickel-containing tetrapyrrole coenzyme F430, the prosthetic group of methyl-coenzyme M reductase (MCR), which plays a key role in methanogenesis and anaerobic methane oxidation. Catalyzes the insertion of Ni(2+) into sirohydrochlorin to yield Ni-sirohydrochlorin. The sequence is that of Sirohydrochlorin cobaltochelatase from Methanosarcina acetivorans (strain ATCC 35395 / DSM 2834 / JCM 12185 / C2A).